A 313-amino-acid polypeptide reads, in one-letter code: Ribonuclease Z (313 aa).

Zn(2+) contacts are provided by His62, His64, Asp66, His67, His142, Asp212, and His270. Residue Asp66 is the Proton acceptor of the active site.

The protein belongs to the RNase Z family. Homodimer. Requires Zn(2+) as cofactor.

It carries out the reaction Endonucleolytic cleavage of RNA, removing extra 3' nucleotides from tRNA precursor, generating 3' termini of tRNAs. A 3'-hydroxy group is left at the tRNA terminus and a 5'-phosphoryl group is left at the trailer molecule.. In terms of biological role, zinc phosphodiesterase, which displays some tRNA 3'-processing endonuclease activity. Probably involved in tRNA maturation, by removing a 3'-trailer from precursor tRNA. This is Ribonuclease Z from Cytophaga hutchinsonii (strain ATCC 33406 / DSM 1761 / CIP 103989 / NBRC 15051 / NCIMB 9469 / D465).